The primary structure comprises 30 residues: VIGGDECNINEHRFLVALYDPDGFLSGGIL.

Residues 1–30 (VIGGDECNINEHRFLVALYDPDGFLSGGIL) form the Peptidase S1 domain.

It belongs to the peptidase S1 family. Snake venom subfamily. As to quaternary structure, monomer. N-Glycosylated. As to expression, expressed by the venom gland.

It localises to the secreted. Inhibited by diisopropylfluorophosphate (DFP). Snake venom serine protease that catalyzes the hydrolysis of arginine esters, kallikrein substrates Pro-Phe-Arg-MCA and Z-Phe-Arg-MCA. Cleaves kininogen analogs to release bradykinin. Induces contraction of the isolated rat uterus directly at high concentrations, but provokes more forceful contractions when injected in presence of bovine plasma. Shows capillary permeability-increasing activity and hypotensive activity on the anesthetized rat. The polypeptide is Snake venom serine protease (Crotalus viridis viridis (Prairie rattlesnake)).